A 499-amino-acid polypeptide reads, in one-letter code: Alpha-amylase A type-1/2 (499 aa).

The first 21 residues, 1-21 (MMVAWWSLFLYGLQVAAPALA), serve as a signal peptide directing secretion. Cysteines 51 and 59 form a disulfide. Substrate is bound by residues glutamine 56 and tryptophan 104. Position 142 (asparagine 142) interacts with Ca(2+). Position 143 (histidine 143) interacts with substrate. Cysteine 171 and cysteine 185 are joined by a disulfide. Ca(2+) is bound by residues glutamate 183 and aspartate 196. Residue asparagine 218 is glycosylated (N-linked (GlcNAc...) asparagine). Arginine 225 provides a ligand contact to substrate. Ca(2+) is bound by residues aspartate 227, histidine 231, and glutamate 251. The Nucleophile role is filled by aspartate 227. 230–231 (KH) lines the substrate pocket. Catalysis depends on glutamate 251, which acts as the Proton donor. Glycine 255 is a substrate binding site. A disulfide bridge links cysteine 261 with cysteine 304. Substrate-binding residues include aspartate 318 and arginine 365. Residues cysteine 461 and cysteine 496 are joined by a disulfide bond.

It belongs to the glycosyl hydrolase 13 family. As to quaternary structure, monomer. Ca(2+) serves as cofactor.

The protein resides in the secreted. It catalyses the reaction Endohydrolysis of (1-&gt;4)-alpha-D-glucosidic linkages in polysaccharides containing three or more (1-&gt;4)-alpha-linked D-glucose units.. The protein is Alpha-amylase A type-1/2 (amy1) of Aspergillus oryzae (strain ATCC 42149 / RIB 40) (Yellow koji mold).